Reading from the N-terminus, the 21-residue chain is Phospholipase A2 crotoxin basic chain (21 aa).

This sequence belongs to the phospholipase A2 family. Group II subfamily. Ca(2+) serves as cofactor. In terms of tissue distribution, expressed by the venom gland.

It is found in the secreted. It carries out the reaction a 1,2-diacyl-sn-glycero-3-phosphocholine + H2O = a 1-acyl-sn-glycero-3-phosphocholine + a fatty acid + H(+). Snake venom phospholipase A2 (PLA2) that induces a conspicuous local myotoxic effect and moderate footpad edema. In vitro, it shows anticoagulant effects and is not cytotoxic on myoblast but is able to lyse myotubes. PLA2 catalyzes the calcium-dependent hydrolysis of the 2-acyl groups in 3-sn-phosphoglycerides. This is Phospholipase A2 crotoxin basic chain from Crotalus durissus cumanensis (South American rattlesnake).